A 385-amino-acid polypeptide reads, in one-letter code: Succinate--CoA ligase [ADP-forming] subunit beta (385 aa).

The 236-residue stretch at 9-244 (KEVLRKYGVS…LDEEDPKEIE (236 aa)) folds into the ATP-grasp domain. ATP is bound by residues K46, 53–55 (GRG), E99, C102, and E107. 2 residues coordinate Mg(2+): N199 and D213. A Phosphoserine modification is found at S220. Residues N264 and 321–323 (GIM) contribute to the substrate site.

It belongs to the succinate/malate CoA ligase beta subunit family. Heterotetramer of two alpha and two beta subunits. Interacts with BrxC. The cofactor is Mg(2+).

The catalysed reaction is succinate + ATP + CoA = succinyl-CoA + ADP + phosphate. It catalyses the reaction GTP + succinate + CoA = succinyl-CoA + GDP + phosphate. It functions in the pathway carbohydrate metabolism; tricarboxylic acid cycle; succinate from succinyl-CoA (ligase route): step 1/1. Succinyl-CoA synthetase functions in the citric acid cycle (TCA), coupling the hydrolysis of succinyl-CoA to the synthesis of either ATP or GTP and thus represents the only step of substrate-level phosphorylation in the TCA. The beta subunit provides nucleotide specificity of the enzyme and binds the substrate succinate, while the binding sites for coenzyme A and phosphate are found in the alpha subunit. In Bacillus subtilis (strain 168), this protein is Succinate--CoA ligase [ADP-forming] subunit beta.